The primary structure comprises 175 residues: ATP synthase subunit delta (175 aa).

It belongs to the ATPase delta chain family. As to quaternary structure, F-type ATPases have 2 components, F(1) - the catalytic core - and F(0) - the membrane proton channel. F(1) has five subunits: alpha(3), beta(3), gamma(1), delta(1), epsilon(1). F(0) has three main subunits: a(1), b(2) and c(10-14). The alpha and beta chains form an alternating ring which encloses part of the gamma chain. F(1) is attached to F(0) by a central stalk formed by the gamma and epsilon chains, while a peripheral stalk is formed by the delta and b chains.

It is found in the cell inner membrane. In terms of biological role, f(1)F(0) ATP synthase produces ATP from ADP in the presence of a proton or sodium gradient. F-type ATPases consist of two structural domains, F(1) containing the extramembraneous catalytic core and F(0) containing the membrane proton channel, linked together by a central stalk and a peripheral stalk. During catalysis, ATP synthesis in the catalytic domain of F(1) is coupled via a rotary mechanism of the central stalk subunits to proton translocation. Its function is as follows. This protein is part of the stalk that links CF(0) to CF(1). It either transmits conformational changes from CF(0) to CF(1) or is implicated in proton conduction. The sequence is that of ATP synthase subunit delta from Stenotrophomonas maltophilia (strain R551-3).